We begin with the raw amino-acid sequence, 122 residues long: Large ribosomal subunit protein uL14 (122 aa).

The protein belongs to the universal ribosomal protein uL14 family. In terms of assembly, part of the 50S ribosomal subunit. Forms a cluster with proteins L3 and L19. In the 70S ribosome, L14 and L19 interact and together make contacts with the 16S rRNA in bridges B5 and B8.

Its function is as follows. Binds to 23S rRNA. Forms part of two intersubunit bridges in the 70S ribosome. This is Large ribosomal subunit protein uL14 from Roseiflexus castenholzii (strain DSM 13941 / HLO8).